Here is a 323-residue protein sequence, read N- to C-terminus: MRTIKIIQTASQLPEKIVSNDDLAGMMDTSDEWIRSRTGIFKRHIAVDETTASLAASVLQKLLKGSGISADQIDFVLVATMSPDSMAPSTAAQASALAGLSNAFAMDINVACSGFVYGLTLAHGLVNTLGSHYGVVIGAETLSKLVDWQERSTAVLFGDGAAGVLVEAVDGPERLLAADLKTFGKEAKSLTAGHLWSSTTWNQPEKGSRYFQMDGHAVYSFATRQVAASIKRTFEKISADIGDTDYFLLHQANQRIIDKVADLLKQPADRFLSNLSKYGNTSAASIPLLLDEMVTGNIVKSGQLLTLSGFGAGLSVGSIVYKY.

Residues Cys-112 and His-250 contribute to the active site. An ACP-binding region spans residues 251 to 255 (QANQR). Asn-280 is an active-site residue.

The protein belongs to the thiolase-like superfamily. FabH family. Homodimer.

The protein resides in the cytoplasm. The catalysed reaction is malonyl-[ACP] + acetyl-CoA + H(+) = 3-oxobutanoyl-[ACP] + CO2 + CoA. It functions in the pathway lipid metabolism; fatty acid biosynthesis. Its function is as follows. Catalyzes the condensation reaction of fatty acid synthesis by the addition to an acyl acceptor of two carbons from malonyl-ACP. Catalyzes the first condensation reaction which initiates fatty acid synthesis and may therefore play a role in governing the total rate of fatty acid production. Possesses both acetoacetyl-ACP synthase and acetyl transacylase activities. Its substrate specificity determines the biosynthesis of branched-chain and/or straight-chain of fatty acids. The polypeptide is Beta-ketoacyl-[acyl-carrier-protein] synthase III (Oenococcus oeni (strain ATCC BAA-331 / PSU-1)).